Here is a 155-residue protein sequence, read N- to C-terminus: Small ribosomal subunit protein uS7c (155 aa).

The protein belongs to the universal ribosomal protein uS7 family. Part of the 30S ribosomal subunit.

The protein resides in the plastid. The protein localises to the chloroplast. One of the primary rRNA binding proteins, it binds directly to 16S rRNA where it nucleates assembly of the head domain of the 30S subunit. In Euonymus alatus (Burning bush), this protein is Small ribosomal subunit protein uS7c (rps7).